The primary structure comprises 308 residues: MSNATKFGKVAVLLGGKSAERAVSLDSGQAVLDALLRSGVQAEAFDPQDRSVTELVNYDRAFIVLHGRGGEDGQIQGVLEWLNIPYTGTGVQGSAIGMDKVKTKQIWQGSDLPTAPYRIITKETDLDSVIAELGLPVIIKPVHEGSSVGMSKVEKAEDFAAAIEKATQHDAVVMAEKWITGREFTISFLNGQPLPVIRLQPPADVAFYDYEAKYQRNDVEYGIPCGLSETEEKKLQALCLRAFQAVGAEGWGRIDAMQDEQGNFWLLEVNTVPGMTSHSLVPKATKAVGYSFDELCVAILEQTLEGTA.

The 198-residue stretch at 104–301 (KQIWQGSDLP…FDELCVAILE (198 aa)) folds into the ATP-grasp domain. 130–185 (IAELGLPVIIKPVHEGSSVGMSKVEKAEDFAAAIEKATQHDAVVMAEKWITGREFT) lines the ATP pocket. 3 residues coordinate Mg(2+): Asp-255, Glu-268, and Asn-270.

Belongs to the D-alanine--D-alanine ligase family. It depends on Mg(2+) as a cofactor. Mn(2+) is required as a cofactor.

It localises to the cytoplasm. It catalyses the reaction 2 D-alanine + ATP = D-alanyl-D-alanine + ADP + phosphate + H(+). Its pathway is cell wall biogenesis; peptidoglycan biosynthesis. In terms of biological role, cell wall formation. The polypeptide is D-alanine--D-alanine ligase (Acinetobacter baumannii (strain SDF)).